The following is a 787-amino-acid chain: ATP-dependent zinc metalloprotease FtsH (787 aa).

Residues 1–5 (MNRKN) lie on the Cytoplasmic side of the membrane. The chain crosses the membrane as a helical span at residues 6–26 (VIRMVTAIAVVVLLGWSFFYF). The Extracellular segment spans residues 27-110 (SDDTRGYKFV…KVTTAVNEGS (84 aa)). The helical transmembrane segment at 111–131 (ILGELLVYVLPLLLLVGLFVM) threads the bilayer. The Cytoplasmic portion of the chain corresponds to 132 to 787 (FSRMQGGARM…VSPSNPPAHG (656 aa)). 203–210 (GPPGTGKT) is a binding site for ATP. His425 lines the Zn(2+) pocket. Glu426 is a catalytic residue. The Zn(2+) site is built by His429 and Asp501. Residues 616-787 (DFGGRIPSDK…VSPSNPPAHG (172 aa)) are disordered. Low complexity-rich tracts occupy residues 650 to 671 (AFKA…AAQS) and 700 to 709 (YGAPPGWHAP). Pro residues predominate over residues 710–720 (GWPPQQPPDYW). Positions 721–732 (YPPEQQPSQSPY) are enriched in low complexity. Residues 733 to 762 (WPQPAPSYPGQAPPPYPSYPPCPSYPPPGQ) are compositionally biased toward pro residues.

In the central section; belongs to the AAA ATPase family. It in the C-terminal section; belongs to the peptidase M41 family. Homohexamer. Zn(2+) serves as cofactor.

The protein localises to the cell membrane. Acts as a processive, ATP-dependent zinc metallopeptidase for both cytoplasmic and membrane proteins. Plays a role in the quality control of integral membrane proteins. The protein is ATP-dependent zinc metalloprotease FtsH of Mycobacterium leprae (strain TN).